The primary structure comprises 80 residues: Acyl carrier protein (80 aa).

Residues 4–79 form the Carrier domain; it reads DATLEKVRSI…DAVKYIEDKQ (76 aa). O-(pantetheine 4'-phosphoryl)serine is present on serine 39.

The protein belongs to the acyl carrier protein (ACP) family. In terms of processing, 4'-phosphopantetheine is transferred from CoA to a specific serine of apo-ACP by AcpS. This modification is essential for activity because fatty acids are bound in thioester linkage to the sulfhydryl of the prosthetic group.

It is found in the cytoplasm. The protein operates within lipid metabolism; fatty acid biosynthesis. In terms of biological role, carrier of the growing fatty acid chain in fatty acid biosynthesis. The protein is Acyl carrier protein of Prochlorococcus marinus (strain MIT 9211).